Reading from the N-terminus, the 307-residue chain is Ribosomal RNA small subunit methyltransferase H (307 aa).

Residues 33–35 (GGY), Asp51, Phe82, Asp96, and Gln103 contribute to the S-adenosyl-L-methionine site.

Belongs to the methyltransferase superfamily. RsmH family.

The protein resides in the cytoplasm. The enzyme catalyses cytidine(1402) in 16S rRNA + S-adenosyl-L-methionine = N(4)-methylcytidine(1402) in 16S rRNA + S-adenosyl-L-homocysteine + H(+). Its function is as follows. Specifically methylates the N4 position of cytidine in position 1402 (C1402) of 16S rRNA. In Rickettsia massiliae (strain Mtu5), this protein is Ribosomal RNA small subunit methyltransferase H.